Here is a 662-residue protein sequence, read N- to C-terminus: MPPSKAEKRGLTLEKLASYDDVITDALVDKIYYWATIRKNRGTRFTASRGLQEEDIAGVIREQVIWDKDPVEAVQQLLDLPGLRKYMKGLRDEKDQDQFKRHLRRYVNIYMPDCPFEVTTTNRYTITDHEASITARRDINPREEIKYLTGVQVAMTEEQEKTLELARKDFSLVISSRKKTRSLFLGPARFANHDCDANARLSTKGYDGMQIVAVKPINEGDEITVSYGDDYFGDNNEECLCHTCEDRQQNGWAPMKRVEDSDDEDMEEAESPVENPSEATSSGTATSGGKRARDITEEDAGADLPPTSKRARIEKKPSPTKARASDHLREATLKKVHSTSSLRREMPVSSIEDPSANINVTSPQMTQDIRNQQRDGLLTVSLDETSSSRESTPQSPLMAASPKSSHSTDATSVDDEHHVDSLPKIKVEPEVVHENPALGVATVKEEVITTTVNAPWPSPPAEDDEMSDLSELSDSMEFDSVKQQIVKRKFRPTLRTTRSKSRYEVHNRVGTPVSSAVGQDGEWVENPRKPGDYMTSSSLLSAKFSKWVECQTCDVQFVQQDGYNTRKECPRCERHSKLYGYAWPKTEREGKHDKEERITDHRIVHRFVDPDEERELKRGKTKKILKESIRERFSTPRSGRESMSASVEVDSGRKRRRVRKTM.

Positions cysteine 114–glycine 228 constitute an SET domain. 2 disordered regions span residues tryptophan 252–histidine 418 and glutamate 627–methionine 662. Positions aspartate 260–serine 271 are enriched in acidic residues. A compositionally biased stretch (low complexity) spans alanine 279 to glycine 289. The segment covering arginine 323–leucine 333 has biased composition (basic and acidic residues). Polar residues-rich tracts occupy residues alanine 356–arginine 370, leucine 382–serine 395, and proline 402–threonine 411. Positions glutamate 627–arginine 640 are enriched in basic and acidic residues. The segment covering arginine 653–methionine 662 has biased composition (basic residues).

The protein belongs to the class V-like SAM-binding methyltransferase superfamily. Histone-lysine methyltransferase family. Suvar4-20 subfamily.

It localises to the nucleus. The protein localises to the chromosome. The catalysed reaction is L-lysyl(20)-[histone H4] + 3 S-adenosyl-L-methionine = N(6),N(6),N(6)-trimethyl-L-lysyl(20)-[histone H4] + 3 S-adenosyl-L-homocysteine + 3 H(+). In terms of biological role, histone methyltransferase that trimethylates 'Lys-20' of histone H4 to form H4K20me3. This chain is Histone-lysine N-methyltransferase SET9 (SET9), found in Phaeosphaeria nodorum (strain SN15 / ATCC MYA-4574 / FGSC 10173) (Glume blotch fungus).